A 144-amino-acid chain; its full sequence is UPF0178 protein Exig_1155 (144 aa).

Residues 110–144 are disordered; the sequence is IRRAGGRTKGPKKRTRQEDASFEQSFSRLLTEKTD. The span at 113-124 shows a compositional bias: basic residues; sequence AGGRTKGPKKRT.

The protein belongs to the UPF0178 family.

The chain is UPF0178 protein Exig_1155 from Exiguobacterium sibiricum (strain DSM 17290 / CCUG 55495 / CIP 109462 / JCM 13490 / 255-15).